An 88-amino-acid chain; its full sequence is LYR motif-containing protein 2 (88 aa).

The transit peptide at 1–19 (MAASRLPPAALTLKQFMRR) directs the protein to the mitochondrion.

Belongs to the complex I LYR family.

It localises to the mitochondrion. Functionally, involved in efficient integration of the N-module into mitochondrial respiratory chain complex I. The sequence is that of LYR motif-containing protein 2 (Lyrm2) from Mus musculus (Mouse).